Consider the following 321-residue polypeptide: Cytoskeleton protein RodZ (321 aa).

Over 1–111 (MNTEATHDQN…LGKRRKKRDG (111 aa)) the chain is Cytoplasmic. In terms of domain architecture, HTH cro/C1-type spans 19–71 (LRNAREQLGLSQQAVAERLCLKVSTVRDIEEDKAPSDLASTFLRGYIRSYARL). A DNA-binding region (H-T-H motif) is located at residues 30–49 (QQAVAERLCLKVSTVRDIEE). The chain crosses the membrane as a helical; Signal-anchor for type II membrane protein span at residues 112–132 (WLMSFTWLVLFVVVGLTGAWW). Residues 133-321 (WQNHKAQQEE…TINAEPTSAQ (189 aa)) lie on the Periplasmic side of the membrane. The segment at 167 to 190 (DTRAAASQDTTPAETAPAAPVDST) is disordered. The span at 176-190 (TTPAETAPAAPVDST) shows a compositional bias: low complexity.

This sequence belongs to the RodZ family.

The protein localises to the cell inner membrane. In terms of biological role, cytoskeletal protein that is involved in cell-shape control through regulation of the length of the long axis. This is Cytoskeleton protein RodZ from Salmonella arizonae (strain ATCC BAA-731 / CDC346-86 / RSK2980).